The sequence spans 458 residues: tRNA modification GTPase MnmE (458 aa).

(6S)-5-formyl-5,6,7,8-tetrahydrofolate contacts are provided by arginine 22, glutamate 84, and arginine 123. One can recognise a TrmE-type G domain in the interval 220–379 (GIATAIIGRP…LEKAIADLFF (160 aa)). Asparagine 230 contributes to the K(+) binding site. Residues 230-235 (NVGKSS), 249-255 (TDIAGTT), and 274-277 (DTAG) contribute to the GTP site. Serine 234 lines the Mg(2+) pocket. Threonine 249, isoleucine 251, and threonine 254 together coordinate K(+). Threonine 255 contributes to the Mg(2+) binding site. A (6S)-5-formyl-5,6,7,8-tetrahydrofolate-binding site is contributed by lysine 458.

The protein belongs to the TRAFAC class TrmE-Era-EngA-EngB-Septin-like GTPase superfamily. TrmE GTPase family. As to quaternary structure, homodimer. Heterotetramer of two MnmE and two MnmG subunits. It depends on K(+) as a cofactor.

It is found in the cytoplasm. Functionally, exhibits a very high intrinsic GTPase hydrolysis rate. Involved in the addition of a carboxymethylaminomethyl (cmnm) group at the wobble position (U34) of certain tRNAs, forming tRNA-cmnm(5)s(2)U34. The protein is tRNA modification GTPase MnmE of Bacillus anthracis.